Consider the following 408-residue polypeptide: Probable ethanolamine permease EutH (408 aa).

Transmembrane regions (helical) follow at residues 1 to 21 (MGIN…AAVD), 61 to 81 (AMVG…PVII), 89 to 109 (ANPS…FFLA), 126 to 146 (ILGS…LGII), 155 to 175 (ALGV…GGLI), 192 to 212 (FALI…VALG), 230 to 250 (FLVA…LLGW), 274 to 294 (IEVI…VLLL), 313 to 333 (NIAA…FGMM), 342 to 362 (VINC…LGFA), and 369 to 389 (MIFP…GVAM).

This sequence belongs to the EutH family.

It is found in the cell inner membrane. It catalyses the reaction ethanolamine(in) = ethanolamine(out). The protein operates within amine and polyamine degradation; ethanolamine degradation. Functionally, probably involved in the diffusion of protonated ethanolamine (EA) into the cell at low pH. At low pH most EA is protonated, and this permease becomes necessary. Contributes to bacterial survival and replication in acidified macrophage vacuoles, but not to bacterial uptake by macrophages. Its function is as follows. Expression of the eut operon allows this bacteria to use ethanolamine (EA) as a carbon, nitrogen and energy source. It relies on cobalamin (vitamin B12) both as a cofactor for the ethanolamine ammonia-lyase (EAL) activity and to induce the operon. EA enhances bacterial survival in macrophages in a concentration-dependent manner, suggesting it is an important nutrient during infection. The chain is Probable ethanolamine permease EutH from Salmonella typhimurium (strain LT2 / SGSC1412 / ATCC 700720).